Reading from the N-terminus, the 134-residue chain is uncharacterized protein (134 aa).

Helical transmembrane passes span 21–41, 52–72, and 95–115; these read FSTTLFEIVIFTFIMITLYLI, LVLLLIAIYVIVLQLFFTPYE, and IVMALDVLAGLMLILAVVYII.

Its subcellular location is the host membrane. This is an uncharacterized protein from Acidianus two-tailed virus (ATV).